The chain runs to 113 residues: UPF0060 membrane protein CV_3485 (113 aa).

4 consecutive transmembrane segments (helical) span residues 12–32, 37–57, 67–87, and 91–111; these read GLFV…WLVL, SLWL…LLTL, AAYG…VDGV, and RWDA…MLAP.

The protein belongs to the UPF0060 family.

The protein resides in the cell inner membrane. This Chromobacterium violaceum (strain ATCC 12472 / DSM 30191 / JCM 1249 / CCUG 213 / NBRC 12614 / NCIMB 9131 / NCTC 9757 / MK) protein is UPF0060 membrane protein CV_3485.